The sequence spans 271 residues: Phosphatidylglycerol--prolipoprotein diacylglyceryl transferase (271 aa).

7 helical membrane passes run 10 to 30 (VALAIGPLKIHWYGLMYLVGI), 56 to 76 (LVFWLSMGVIVGGRLGYVLFY), 92 to 112 (WKGGMSFHGGFIGVMLAALWF), 120 to 140 (FFQLMDFVAPMVPIGLGAGRI), 174 to 194 (PSQLYQFALEGVALFLILWLF), 202 to 222 (MAVSGMFALFYGIFRFIVEFV), and 237 to 257 (LTMGQVLCVPMIIGGLFLIWL). Residue Arg-139 participates in a 1,2-diacyl-sn-glycero-3-phospho-(1'-sn-glycerol) binding.

The protein belongs to the Lgt family.

The protein localises to the cell inner membrane. It carries out the reaction L-cysteinyl-[prolipoprotein] + a 1,2-diacyl-sn-glycero-3-phospho-(1'-sn-glycerol) = an S-1,2-diacyl-sn-glyceryl-L-cysteinyl-[prolipoprotein] + sn-glycerol 1-phosphate + H(+). It functions in the pathway protein modification; lipoprotein biosynthesis (diacylglyceryl transfer). Functionally, catalyzes the transfer of the diacylglyceryl group from phosphatidylglycerol to the sulfhydryl group of the N-terminal cysteine of a prolipoprotein, the first step in the formation of mature lipoproteins. This Pseudomonas fluorescens (strain Pf0-1) protein is Phosphatidylglycerol--prolipoprotein diacylglyceryl transferase.